Consider the following 212-residue polypeptide: Maleylpyruvate isomerase (212 aa).

A GST N-terminal domain is found at 1–80 (MKLYNFWRSG…WLEEQYPTPA (80 aa)). Residues 9–11 (SGT), His38, Val52, 64–65 (QS), 102–104 (DIH), 108–110 (NRR), and Arg176 contribute to the glutathione site. Positions 85-212 (DADGRQRVRA…AAPAAQPDSA (128 aa)) constitute a GST C-terminal domain.

Belongs to the GST superfamily. Zeta family. As to quaternary structure, homodimer. The cofactor is glutathione.

It carries out the reaction 3-maleylpyruvate = 3-fumarylpyruvate. It participates in aromatic compound metabolism; naphthalene degradation. Its function is as follows. Catalyzes the GSH-dependent isomerization of maleylpyruvate to fumarylpyruvate which is subsequently processed by NagK to form pyruvate and fumarate. The sequence is that of Maleylpyruvate isomerase from Ralstonia sp.